The sequence spans 207 residues: ATP-dependent Clp protease proteolytic subunit (207 aa).

Ser-111 (nucleophile) is an active-site residue. The active site involves His-136.

This sequence belongs to the peptidase S14 family. In terms of assembly, fourteen ClpP subunits assemble into 2 heptameric rings which stack back to back to give a disk-like structure with a central cavity, resembling the structure of eukaryotic proteasomes.

Its subcellular location is the cytoplasm. The enzyme catalyses Hydrolysis of proteins to small peptides in the presence of ATP and magnesium. alpha-casein is the usual test substrate. In the absence of ATP, only oligopeptides shorter than five residues are hydrolyzed (such as succinyl-Leu-Tyr-|-NHMec, and Leu-Tyr-Leu-|-Tyr-Trp, in which cleavage of the -Tyr-|-Leu- and -Tyr-|-Trp bonds also occurs).. Cleaves peptides in various proteins in a process that requires ATP hydrolysis. Has a chymotrypsin-like activity. Plays a major role in the degradation of misfolded proteins. This Psychromonas ingrahamii (strain DSM 17664 / CCUG 51855 / 37) protein is ATP-dependent Clp protease proteolytic subunit.